Consider the following 212-residue polypeptide: Octanoyltransferase (212 aa).

One can recognise a BPL/LPL catalytic domain in the interval 31 to 209 (AETQDEIWLV…HFADLLGYNI (179 aa)). Substrate contacts are provided by residues 70–77 (RGGQITYH), 138–140 (SLG), and 151–153 (GLA). Residue Cys169 is the Acyl-thioester intermediate of the active site.

Belongs to the LipB family.

Its subcellular location is the cytoplasm. The enzyme catalyses octanoyl-[ACP] + L-lysyl-[protein] = N(6)-octanoyl-L-lysyl-[protein] + holo-[ACP] + H(+). It participates in protein modification; protein lipoylation via endogenous pathway; protein N(6)-(lipoyl)lysine from octanoyl-[acyl-carrier-protein]: step 1/2. Its function is as follows. Catalyzes the transfer of endogenously produced octanoic acid from octanoyl-acyl-carrier-protein onto the lipoyl domains of lipoate-dependent enzymes. Lipoyl-ACP can also act as a substrate although octanoyl-ACP is likely to be the physiological substrate. This is Octanoyltransferase from Haemophilus influenzae (strain PittEE).